The chain runs to 188 residues: GMP synthase [glutamine-hydrolyzing] subunit A (188 aa).

Positions 1-188 (MIVIMDNGGQ…RNFAELCGEL (188 aa)) constitute a Glutamine amidotransferase type-1 domain. Cys78 (nucleophile) is an active-site residue. Active-site residues include His165 and Glu167.

Heterodimer composed of a glutamine amidotransferase subunit (A) and a GMP-binding subunit (B).

It carries out the reaction XMP + L-glutamine + ATP + H2O = GMP + L-glutamate + AMP + diphosphate + 2 H(+). Its pathway is purine metabolism; GMP biosynthesis; GMP from XMP (L-Gln route): step 1/1. In terms of biological role, catalyzes the synthesis of GMP from XMP. This chain is GMP synthase [glutamine-hydrolyzing] subunit A, found in Thermococcus kodakarensis (strain ATCC BAA-918 / JCM 12380 / KOD1) (Pyrococcus kodakaraensis (strain KOD1)).